The chain runs to 316 residues: MCMSQFPIEFQIECAASTINHARDIYAKFILQPLSYTQALTMGNSLRRVLLSELESISITAVRIAGASHELATLKGVREDVLQIMLNLKQIVWRGQLKKQPTITRLKVQGPAIVTAAAFQSEANSSANIIDTCQYIATIDTQDILEMECQLEQSSGYRLAKPSEMIDWLPIDGVFMPVKRVNFWVDKALVDKVLVDKALHLEIWTNGSISPQEALHQAARILTHWFNPLQTLEWKTSHTKNEQTMAQLSNMLIEELDLSVRAYNCLKRAQIHSVADLMQYTQEELLALKNFGQKSVEEVNKALEQKLHCQLKKYVD.

An alpha N-terminal domain (alpha-NTD) region spans residues 1-233 (MCMSQFPIEF…HWFNPLQTLE (233 aa)). The segment at 245–316 (MAQLSNMLIE…LHCQLKKYVD (72 aa)) is alpha C-terminal domain (alpha-CTD).

This sequence belongs to the RNA polymerase alpha chain family. In plastids the minimal PEP RNA polymerase catalytic core is composed of four subunits: alpha, beta, beta', and beta''. When a (nuclear-encoded) sigma factor is associated with the core the holoenzyme is formed, which can initiate transcription.

It is found in the plastid. The protein resides in the chloroplast. The catalysed reaction is RNA(n) + a ribonucleoside 5'-triphosphate = RNA(n+1) + diphosphate. Functionally, DNA-dependent RNA polymerase catalyzes the transcription of DNA into RNA using the four ribonucleoside triphosphates as substrates. This is DNA-directed RNA polymerase subunit alpha from Cyanidioschyzon merolae (strain NIES-3377 / 10D) (Unicellular red alga).